A 348-amino-acid polypeptide reads, in one-letter code: RNA 3'-terminal phosphate cyclase (348 aa).

ATP contacts are provided by residues glutamine 107 and 290 to 294 (HLADQ). Histidine 316 (tele-AMP-histidine intermediate) is an active-site residue.

This sequence belongs to the RNA 3'-terminal cyclase family. Type 1 subfamily.

It localises to the cytoplasm. The catalysed reaction is a 3'-end 3'-phospho-ribonucleotide-RNA + ATP = a 3'-end 2',3'-cyclophospho-ribonucleotide-RNA + AMP + diphosphate. Functionally, catalyzes the conversion of 3'-phosphate to a 2',3'-cyclic phosphodiester at the end of RNA. The mechanism of action of the enzyme occurs in 3 steps: (A) adenylation of the enzyme by ATP; (B) transfer of adenylate to an RNA-N3'P to produce RNA-N3'PP5'A; (C) and attack of the adjacent 2'-hydroxyl on the 3'-phosphorus in the diester linkage to produce the cyclic end product. The biological role of this enzyme is unknown but it is likely to function in some aspects of cellular RNA processing. In Nostoc punctiforme (strain ATCC 29133 / PCC 73102), this protein is RNA 3'-terminal phosphate cyclase.